The sequence spans 283 residues: Peroxisome biogenesis protein 22 (283 aa).

Ala2 bears the N-acetylalanine mark. A helical membrane pass occupies residues 45–62; the sequence is IGAIAGLAIAVIFTWRAI. The interval 66 to 107 is disordered; it reads GEQRQRRQPKRRIHNAETSSAAAAASQSNLASSVAPEVSSPR. Residues 81-100 are compositionally biased toward low complexity; sequence AETSSAAAAASQSNLASSVA.

This sequence belongs to the peroxin-22 family. In terms of assembly, interacts with PEX4.

Its subcellular location is the peroxisome membrane. In terms of biological role, may be tethered PEX4 to the peroxisome membrane and may be involved in a late step of the matrix protein import. Does not play a role in the biogenesis of the peroxisomal membrane. This chain is Peroxisome biogenesis protein 22 (PEX22), found in Arabidopsis thaliana (Mouse-ear cress).